Reading from the N-terminus, the 274-residue chain is NH(3)-dependent NAD(+) synthetase (274 aa).

ATP is bound at residue 46 to 53 (GISGGQDS). Asp-52 is a binding site for Mg(2+). Residue Arg-140 coordinates deamido-NAD(+). An ATP-binding site is contributed by Thr-160. Glu-165 serves as a coordination point for Mg(2+). Deamido-NAD(+) is bound by residues Lys-173 and Asp-180. ATP is bound by residues Lys-189 and Thr-211. 260–261 (HK) contributes to the deamido-NAD(+) binding site.

This sequence belongs to the NAD synthetase family. As to quaternary structure, homodimer.

It carries out the reaction deamido-NAD(+) + NH4(+) + ATP = AMP + diphosphate + NAD(+) + H(+). It participates in cofactor biosynthesis; NAD(+) biosynthesis; NAD(+) from deamido-NAD(+) (ammonia route): step 1/1. In terms of biological role, catalyzes the ATP-dependent amidation of deamido-NAD to form NAD. Uses ammonia as a nitrogen source. The chain is NH(3)-dependent NAD(+) synthetase from Streptococcus gordonii (strain Challis / ATCC 35105 / BCRC 15272 / CH1 / DL1 / V288).